The chain runs to 325 residues: Cytochrome f (325 aa).

An N-terminal signal peptide occupies residues 1–40; the sequence is MKTPELMAIWQRLKTACLVAIATFGLFFASDVLFPQAAAA. Y41, C62, C65, and H66 together coordinate heme. A helical transmembrane segment spans residues 290-309; that stretch reads IYGYMAFVAGIMLTQIFLVL.

This sequence belongs to the cytochrome f family. In terms of assembly, the 4 large subunits of the cytochrome b6-f complex are cytochrome b6, subunit IV (17 kDa polypeptide, PetD), cytochrome f and the Rieske protein, while the 4 small subunits are PetG, PetL, PetM and PetN. The complex functions as a dimer. Heme is required as a cofactor.

The protein resides in the cellular thylakoid membrane. Component of the cytochrome b6-f complex, which mediates electron transfer between photosystem II (PSII) and photosystem I (PSI), cyclic electron flow around PSI, and state transitions. This is Cytochrome f (petA) from Picosynechococcus sp. (strain ATCC 27264 / PCC 7002 / PR-6) (Agmenellum quadruplicatum).